Consider the following 92-residue polypeptide: RNA-binding protein Hfq (92 aa).

Residues 9 to 68 (DPFLNALRRERVPVSIYLVNGIKLQGQVESFDQFVILLKNTVSQMVYKHAISTVVPSRPF) form the Sm domain. The span at 73 to 82 (HQATNAQAGY) shows a compositional bias: polar residues. Residues 73 to 92 (HQATNAQAGYNAQHDDGDEK) form a disordered region.

This sequence belongs to the Hfq family. In terms of assembly, homohexamer.

RNA chaperone that binds small regulatory RNA (sRNAs) and mRNAs to facilitate mRNA translational regulation in response to envelope stress, environmental stress and changes in metabolite concentrations. Also binds with high specificity to tRNAs. This is RNA-binding protein Hfq from Shewanella pealeana (strain ATCC 700345 / ANG-SQ1).